We begin with the raw amino-acid sequence, 118 residues long: Large ribosomal subunit protein uL22c (118 aa).

This sequence belongs to the universal ribosomal protein uL22 family. In terms of assembly, part of the 50S ribosomal subunit.

Its subcellular location is the plastid. The protein localises to the chloroplast. Its function is as follows. This protein binds specifically to 23S rRNA. Functionally, the globular domain of the protein is located near the polypeptide exit tunnel on the outside of the subunit, while an extended beta-hairpin is found that lines the wall of the exit tunnel in the center of the 70S ribosome. This Physcomitrium patens (Spreading-leaved earth moss) protein is Large ribosomal subunit protein uL22c (rpl22).